Consider the following 777-residue polypeptide: Intraflagellar transport protein 80 homolog (777 aa).

WD repeat units follow at residues 12 to 50, 104 to 143, 145 to 185, 186 to 225, 227 to 265, 267 to 306, and 504 to 542; these read KHQE…TSLI, AHCG…RSTL, QQGT…LQWK, AHDG…LYGS, PHEH…YALE, PNTG…WEWK, and KLGT…YVDR.

As to quaternary structure, component of the IFT complex B, at least composed of IFT20, IFT22, IFT25, IFT27, IFT46, IFT52, TRAF3IP1/IFT54, IFT57, IFT74, IFT80, IFT81, and IFT88. Interacts with IFT88. Interacts with IFT57 and IFT70B.

The protein localises to the cytoplasm. Its subcellular location is the cytoskeleton. The protein resides in the cilium basal body. It localises to the cilium axoneme. Its function is as follows. Component of the intraflagellar transport (IFT) complex B, which is essential for the development and maintenance of motile and sensory cilia. The polypeptide is Intraflagellar transport protein 80 homolog (Ift80) (Mus musculus (Mouse)).